A 437-amino-acid chain; its full sequence is tRNA-2-methylthio-N(6)-dimethylallyladenosine synthase (437 aa).

One can recognise an MTTase N-terminal domain in the interval 1 to 115 (MKVYIETMGC…ISQVIHKEKA (115 aa)). 6 residues coordinate [4Fe-4S] cluster: Cys10, Cys46, Cys78, Cys148, Cys152, and Cys155. In terms of domain architecture, Radical SAM core spans 134 to 367 (KKAQIRSLLN…QNRHKEILEE (234 aa)). In terms of domain architecture, TRAM spans 370–436 (KLEVGKTHVV…KGRLMATTKG (67 aa)).

Belongs to the methylthiotransferase family. MiaB subfamily. As to quaternary structure, monomer. [4Fe-4S] cluster is required as a cofactor.

The protein resides in the cytoplasm. It carries out the reaction N(6)-dimethylallyladenosine(37) in tRNA + (sulfur carrier)-SH + AH2 + 2 S-adenosyl-L-methionine = 2-methylsulfanyl-N(6)-dimethylallyladenosine(37) in tRNA + (sulfur carrier)-H + 5'-deoxyadenosine + L-methionine + A + S-adenosyl-L-homocysteine + 2 H(+). In terms of biological role, catalyzes the methylthiolation of N6-(dimethylallyl)adenosine (i(6)A), leading to the formation of 2-methylthio-N6-(dimethylallyl)adenosine (ms(2)i(6)A) at position 37 in tRNAs that read codons beginning with uridine. The protein is tRNA-2-methylthio-N(6)-dimethylallyladenosine synthase of Helicobacter pylori (strain G27).